The chain runs to 144 residues: Urease subunit beta (144 aa).

Belongs to the urease beta subunit family. As to quaternary structure, heterotrimer of UreA (gamma), UreB (beta) and UreC (alpha) subunits. Three heterotrimers associate to form the active enzyme.

The protein resides in the cytoplasm. It carries out the reaction urea + 2 H2O + H(+) = hydrogencarbonate + 2 NH4(+). It participates in nitrogen metabolism; urea degradation; CO(2) and NH(3) from urea (urease route): step 1/1. The protein is Urease subunit beta of Yersinia pseudotuberculosis serotype O:1b (strain IP 31758).